A 307-amino-acid chain; its full sequence is N-acetylmuramic acid 6-phosphate etherase (307 aa).

The region spanning 62 to 225 (IVAAFQKGGR…TTASMIRIGK (164 aa)) is the SIS domain. E90 acts as the Proton donor in catalysis. E121 is an active-site residue.

It belongs to the GCKR-like family. MurNAc-6-P etherase subfamily. In terms of assembly, homodimer.

The catalysed reaction is N-acetyl-D-muramate 6-phosphate + H2O = N-acetyl-D-glucosamine 6-phosphate + (R)-lactate. It participates in amino-sugar metabolism; 1,6-anhydro-N-acetylmuramate degradation. Its pathway is amino-sugar metabolism; N-acetylmuramate degradation. The protein operates within cell wall biogenesis; peptidoglycan recycling. Specifically catalyzes the cleavage of the D-lactyl ether substituent of MurNAc 6-phosphate, producing GlcNAc 6-phosphate and D-lactate. Together with AnmK, is also required for the utilization of anhydro-N-acetylmuramic acid (anhMurNAc) either imported from the medium or derived from its own cell wall murein, and thus plays a role in cell wall recycling. This is N-acetylmuramic acid 6-phosphate etherase from Rhizobium rhizogenes (strain K84 / ATCC BAA-868) (Agrobacterium radiobacter).